Here is an 804-residue protein sequence, read N- to C-terminus: MSFQHREIEKKWQDYWLTHKTFATSDSEDKPKFYALDMFPYPSGAGLHVGHPEGYTATDILSRMKRMQGYDVLHPMGWDAFGLPAEQYALDTGNDPAVFTEENINNFRRQIQSLGFSYDWDREINTTDPNYYKWTQWIFLKLYEKGLAYIDEVPVNWCPALGTVLANEEVIDGKSERGGHPVERRPMKQWMLKITAYADRLLEDLEDIDWPESIKDMQRNWIGRSEGAHVHFEIEGHDEQFTVFTTRPDTLFGATYAVLAPEHALVEKITTATQKEAVEAYIKEIQSKSDLERTDLAKTKTGIFTGAYAVNPLNGEKMPIWIADYVLATYGTGAIMAVPAHDERDYEFAKTFDLPIKAVVEGGDIEEEAYTGDGKHINSDFLDGLGKEEAIEKVIAWLEEHQKGEKKVTYRLRDWLFSRQRYWGEPIPIIHWEDGTSSAVSEEDLPLILPKTTEIKPSGTGESPLANIKDWVEVVDPVTGKKGRRETNTMPQWAGSCWYFLRYIDPHNSEELASPEKLKKWLPVDVYIGGAEHAVLHLLYARFWHKFLYDIGVVPTKEPFMKLFNQGMILGENNEKMSKSKGNVVNPDDIVESHGADTLRLYEMFMGPLDASIAWSETGLDGARRFLDRVWRLFTNEDGTISDKVTEQTGGALERSYHETVMKVTDHYEGLRFNTGISQLMVFINDAYKADTLPKEYAEGFVKLLSPIAPHLAEELWNKLGHEGSISYEAWPQYDESKLVDDEVEIVVQLNGKVKAKLTVPADATKEQLEDLAKSDARVKEQLEGKTIRKVIAVPGKLVNIVAN.

The short motif at 40–51 (PYPSGAGLHVGH) is the 'HIGH' region element. A 'KMSKS' region motif is present at residues 576–580 (KMSKS). Position 579 (K579) interacts with ATP.

The protein belongs to the class-I aminoacyl-tRNA synthetase family.

It is found in the cytoplasm. The enzyme catalyses tRNA(Leu) + L-leucine + ATP = L-leucyl-tRNA(Leu) + AMP + diphosphate. This chain is Leucine--tRNA ligase, found in Bacillus pumilus (strain SAFR-032).